The chain runs to 821 residues: DNA ligase (821 aa).

Residues 33 to 37 (DVDYD), 82 to 83 (SL), and glutamate 113 contribute to the NAD(+) site. Residue lysine 115 is the N6-AMP-lysine intermediate of the active site. NAD(+) contacts are provided by arginine 136, glutamate 173, lysine 290, and lysine 314. Positions 408, 411, 426, and 432 each coordinate Zn(2+). Residues 741–821 (IVAGPLDGQT…RLLAYLAEHE (81 aa)) enclose the BRCT domain.

Belongs to the NAD-dependent DNA ligase family. LigA subfamily. It depends on Mg(2+) as a cofactor. Requires Mn(2+) as cofactor.

The catalysed reaction is NAD(+) + (deoxyribonucleotide)n-3'-hydroxyl + 5'-phospho-(deoxyribonucleotide)m = (deoxyribonucleotide)n+m + AMP + beta-nicotinamide D-nucleotide.. In terms of biological role, DNA ligase that catalyzes the formation of phosphodiester linkages between 5'-phosphoryl and 3'-hydroxyl groups in double-stranded DNA using NAD as a coenzyme and as the energy source for the reaction. It is essential for DNA replication and repair of damaged DNA. The protein is DNA ligase of Stenotrophomonas maltophilia (strain K279a).